The primary structure comprises 373 residues: Queuine tRNA-ribosyltransferase (373 aa).

Catalysis depends on D93, which acts as the Proton acceptor. Residues 93 to 97 (DSGGF), D147, Q190, and G219 each bind substrate. An RNA binding region spans residues 250 to 256 (GVGEPVD). The active-site Nucleophile is the D269. The tract at residues 274 to 278 (TRLAR) is RNA binding; important for wobble base 34 recognition. Zn(2+) contacts are provided by C307, C309, C312, and H338.

The protein belongs to the queuine tRNA-ribosyltransferase family. Homodimer. Within each dimer, one monomer is responsible for RNA recognition and catalysis, while the other monomer binds to the replacement base PreQ1. Requires Zn(2+) as cofactor.

The enzyme catalyses 7-aminomethyl-7-carbaguanine + guanosine(34) in tRNA = 7-aminomethyl-7-carbaguanosine(34) in tRNA + guanine. It participates in tRNA modification; tRNA-queuosine biosynthesis. Its function is as follows. Catalyzes the base-exchange of a guanine (G) residue with the queuine precursor 7-aminomethyl-7-deazaguanine (PreQ1) at position 34 (anticodon wobble position) in tRNAs with GU(N) anticodons (tRNA-Asp, -Asn, -His and -Tyr). Catalysis occurs through a double-displacement mechanism. The nucleophile active site attacks the C1' of nucleotide 34 to detach the guanine base from the RNA, forming a covalent enzyme-RNA intermediate. The proton acceptor active site deprotonates the incoming PreQ1, allowing a nucleophilic attack on the C1' of the ribose to form the product. After dissociation, two additional enzymatic reactions on the tRNA convert PreQ1 to queuine (Q), resulting in the hypermodified nucleoside queuosine (7-(((4,5-cis-dihydroxy-2-cyclopenten-1-yl)amino)methyl)-7-deazaguanosine). The polypeptide is Queuine tRNA-ribosyltransferase (Fusobacterium nucleatum subsp. nucleatum (strain ATCC 25586 / DSM 15643 / BCRC 10681 / CIP 101130 / JCM 8532 / KCTC 2640 / LMG 13131 / VPI 4355)).